The sequence spans 130 residues: Protein ApaG (130 aa).

The ApaG domain maps to Ser-3 to Arg-127.

In Brucella canis (strain ATCC 23365 / NCTC 10854 / RM-666), this protein is Protein ApaG.